Here is a 743-residue protein sequence, read N- to C-terminus: Myb-related protein B (743 aa).

Residues 1 to 29 (MSRRSRGDDLEDLQYQDTDSDVPEPKENR) form a disordered region. Over residues 9–22 (DLEDLQYQDTDSDV) the composition is skewed to acidic residues. 3 consecutive HTH myb-type domains span residues 26-77 (KENR…LRVL), 78-133 (HPDL…NPEV), and 134-184 (KKSS…KRKV). DNA-binding regions (H-T-H motif) lie at residues 54 to 77 (WKTIASNLNNRTEQQCQHRWLRVL), 106 to 129 (WTLIAKQLRGRMGKQCRERWHNHL), and 157 to 180 (WAEIAKLLPGRTDNAVKNHWNSTI). Disordered regions lie at residues 221 to 262 (VERS…SESA) and 381 to 406 (VTENGGSITTSVTEANSMTPKSTPVK).

In terms of assembly, component of the DREAM complex.

It is found in the nucleus. The protein is Myb-related protein B (mybl2) of Xenopus laevis (African clawed frog).